The primary structure comprises 34 residues: Corticostatin-2 (34 aa).

Disulfide bonds link cysteine 3–cysteine 32, cysteine 5–cysteine 21, and cysteine 11–cysteine 31.

It belongs to the alpha-defensin family.

Its subcellular location is the secreted. Functionally, microbicidal activity and inhibits corticotropin (ACTH) stimulated corticosterone production. The sequence is that of Corticostatin-2 from Oryctolagus cuniculus (Rabbit).